Consider the following 349-residue polypeptide: Holliday junction branch migration complex subunit RuvB (349 aa).

A large ATPase domain (RuvB-L) region spans residues 1 to 183; the sequence is MTDPSRLVTP…FGIPIRLNFY (183 aa). ATP contacts are provided by residues Leu-22, Arg-23, Gly-64, Lys-67, Thr-68, Thr-69, 130 to 132, Arg-173, Tyr-183, and Arg-220; that span reads EDF. Residue Thr-68 participates in Mg(2+) binding. Residues 184-254 form a small ATPAse domain (RuvB-S) region; that stretch reads TIEELESIVT…IADHALGALE (71 aa). Residues 257-349 are head domain (RuvB-H); it reads SAGLDAMDRR…GLFGDTGDQE (93 aa). DNA is bound by residues Arg-293, Arg-312, and Arg-317.

It belongs to the RuvB family. Homohexamer. Forms an RuvA(8)-RuvB(12)-Holliday junction (HJ) complex. HJ DNA is sandwiched between 2 RuvA tetramers; dsDNA enters through RuvA and exits via RuvB. An RuvB hexamer assembles on each DNA strand where it exits the tetramer. Each RuvB hexamer is contacted by two RuvA subunits (via domain III) on 2 adjacent RuvB subunits; this complex drives branch migration. In the full resolvosome a probable DNA-RuvA(4)-RuvB(12)-RuvC(2) complex forms which resolves the HJ.

The protein resides in the cytoplasm. It carries out the reaction ATP + H2O = ADP + phosphate + H(+). The RuvA-RuvB-RuvC complex processes Holliday junction (HJ) DNA during genetic recombination and DNA repair, while the RuvA-RuvB complex plays an important role in the rescue of blocked DNA replication forks via replication fork reversal (RFR). RuvA specifically binds to HJ cruciform DNA, conferring on it an open structure. The RuvB hexamer acts as an ATP-dependent pump, pulling dsDNA into and through the RuvAB complex. RuvB forms 2 homohexamers on either side of HJ DNA bound by 1 or 2 RuvA tetramers; 4 subunits per hexamer contact DNA at a time. Coordinated motions by a converter formed by DNA-disengaged RuvB subunits stimulates ATP hydrolysis and nucleotide exchange. Immobilization of the converter enables RuvB to convert the ATP-contained energy into a lever motion, pulling 2 nucleotides of DNA out of the RuvA tetramer per ATP hydrolyzed, thus driving DNA branch migration. The RuvB motors rotate together with the DNA substrate, which together with the progressing nucleotide cycle form the mechanistic basis for DNA recombination by continuous HJ branch migration. Branch migration allows RuvC to scan DNA until it finds its consensus sequence, where it cleaves and resolves cruciform DNA. This chain is Holliday junction branch migration complex subunit RuvB, found in Rhodopseudomonas palustris (strain TIE-1).